A 450-amino-acid chain; its full sequence is Na(+)/H(+) antiporter NhaA 1 (450 aa).

11 helical membrane-spanning segments follow: residues 35–55 (SSLF…SDYA), 79–99 (LKHI…GLEI), 117–137 (LIIC…GFNW), 143–163 (IGWG…LTMV), 173–193 (AFIV…IAIF), 198–218 (ISLM…VANY), 224–244 (PLFY…SGVH), 320–340 (LPVV…VVIN), 356–376 (IISG…WFAL), 392–412 (VIGA…IATL), and 423–443 (VAKT…LLYL).

Belongs to the NhaA Na(+)/H(+) (TC 2.A.33) antiporter family.

The protein resides in the cell inner membrane. The enzyme catalyses Na(+)(in) + 2 H(+)(out) = Na(+)(out) + 2 H(+)(in). Na(+)/H(+) antiporter that extrudes sodium in exchange for external protons. In Shewanella denitrificans (strain OS217 / ATCC BAA-1090 / DSM 15013), this protein is Na(+)/H(+) antiporter NhaA 1.